The primary structure comprises 1129 residues: Tyrosine-protein kinase JAK2 (1129 aa).

An FERM domain is found at 35-378 (PLLQVYLYYS…GYYRLTADAH (344 aa)). Phosphotyrosine; by autocatalysis is present on Tyr-117. Residues 399–480 (HGPIFMDFAI…NLKDLLTCYQ (82 aa)) enclose the SH2; atypical domain. Protein kinase domains follow at residues 542–806 (LIFE…NSLF) and 846–1118 (LKFL…DLAQ). 852-860 (LGKGNFGSV) contacts ATP. Phosphotyrosine; by autocatalysis is present on Tyr-865. Lys-879 provides a ligand contact to ATP. Phosphotyrosine; by autocatalysis occurs at positions 963 and 969. The active-site Proton acceptor is the Asp-973. Residues Tyr-1004 and Tyr-1005 each carry the phosphotyrosine; by autocatalysis modification.

This sequence belongs to the protein kinase superfamily. Tyr protein kinase family. JAK subfamily. Autophosphorylated, leading to regulate its activity.

The protein resides in the endomembrane system. It is found in the nucleus. It catalyses the reaction L-tyrosyl-[protein] + ATP = O-phospho-L-tyrosyl-[protein] + ADP + H(+). Regulated by autophosphorylation, can both activate or decrease activity. Heme regulates its activity by enhancing the phosphorylation on Tyr-1004 and Tyr-1005. In terms of biological role, non-receptor tyrosine kinase involved in various processes such as cell growth, development, differentiation or histone modifications. Mediates essential signaling events in both innate and adaptive immunity. In the cytoplasm, plays a pivotal role in signal transduction via its association with cytokine receptors. Following ligand-binding to cell surface receptors, phosphorylates specific tyrosine residues on the cytoplasmic tails of the receptor, creating docking sites for STATs proteins. Subsequently, phosphorylates the STATs proteins once they are recruited to the receptor. Phosphorylated STATs then form homodimer or heterodimers and translocate to the nucleus to activate gene transcription. For example, cell stimulation with erythropoietin (EPO) during erythropoiesis leads to JAK2 autophosphorylation, activation, and its association with erythropoietin receptor (EPOR) that becomes phosphorylated in its cytoplasmic domain. Then, STAT5 (STAT5A or STAT5B) is recruited, phosphorylated and activated by JAK2. Once activated, dimerized STAT5 translocates into the nucleus and promotes the transcription of several essential genes involved in the modulation of erythropoiesis. Part of a signaling cascade that is activated by increased cellular retinol and that leads to the activation of STAT5 (STAT5A or STAT5B). In the nucleus, plays a key role in chromatin by specifically mediating phosphorylation of 'Tyr-41' of histone H3 (H3Y41ph), a specific tag that promotes exclusion of CBX5 (HP1 alpha) from chromatin. Up-regulates the potassium voltage-gated channel activity of KCNA3. The protein is Tyrosine-protein kinase JAK2 of Gallus gallus (Chicken).